We begin with the raw amino-acid sequence, 441 residues long: Transcriptional regulatory protein ZraR (441 aa).

Positions 7 to 121 constitute a Response regulatory domain; that stretch reads DILVVDDDVS…RLQETLEKAL (115 aa). D56 bears the 4-aspartylphosphate mark. In terms of domain architecture, Sigma-54 factor interaction spans 141–370; it reads MIGSSPAMQH…LENAIERAVV (230 aa). Residues G172, T173, R329, and R359 each contribute to the ATP site. The H-T-H motif DNA-binding region spans 421 to 440; that stretch reads KTEAARQLGITRKTLLAKLS.

Phosphorylated by ZraS.

It is found in the cytoplasm. With respect to regulation, activity of the ZraS/ZraR two-component system is repressed by the zinc-bound form of ZraP, which probably interacts with the periplasmic region of ZraS. In terms of biological role, part of the Zra signaling pathway, an envelope stress response (ESR) system composed of the periplasmic accessory protein ZraP, the histidine kinase ZraS and the transcriptional regulator ZraR. The ZraPSR system contributes to antibiotic resistance and is important for membrane integrity in the presence of membrane-targeting biocides. ZraR is a member of the two-component regulatory system ZraS/ZraR. When activated by ZraS, acts in conjunction with sigma-54 to regulate the expression of zraP in the presence of high Zn(2+) or Pb(2+) concentrations. Also positively autoregulates the expression of the zraSR operon. The protein is Transcriptional regulatory protein ZraR (zraR) of Salmonella typhi.